The chain runs to 197 residues: Small ribosomal subunit protein uS4 (197 aa).

The S4 RNA-binding domain occupies 94–158 (RRLDNVIYRF…LKKYLYDYKN (65 aa)).

It belongs to the universal ribosomal protein uS4 family. In terms of assembly, part of the 30S ribosomal subunit. Contacts protein S5. The interaction surface between S4 and S5 is involved in control of translational fidelity.

In terms of biological role, one of the primary rRNA binding proteins, it binds directly to 16S rRNA where it nucleates assembly of the body of the 30S subunit. Its function is as follows. With S5 and S12 plays an important role in translational accuracy. This chain is Small ribosomal subunit protein uS4 (rpsD), found in Carsonella ruddii (strain PV).